The chain runs to 99 residues: Putative protein adenylyltransferase MJ0141 (99 aa).

Residues 29-43 (GSYARGDYDEESDVD) carry the GSX(10)DXD motif motif. Residues D41 and D43 each contribute to the Mg(2+) site.

It belongs to the MntA antitoxin family. Requires Mg(2+) as cofactor.

It carries out the reaction L-tyrosyl-[protein] + ATP = O-(5'-adenylyl)-L-tyrosyl-[protein] + diphosphate. It catalyses the reaction O-(5'-adenylyl)-L-tyrosyl-[protein] + ATP = O-[5'-(adenylyl-(5'-&gt;3')-adenylyl)]-L-tyrosyl-[protein] + diphosphate. Putative antitoxin component of a putative type VII toxin-antitoxin (TA) system. Its cognate toxin might be MF0142, which it might AMPylate. This Methanocaldococcus jannaschii (strain ATCC 43067 / DSM 2661 / JAL-1 / JCM 10045 / NBRC 100440) (Methanococcus jannaschii) protein is Putative protein adenylyltransferase MJ0141.